Here is a 412-residue protein sequence, read N- to C-terminus: uncharacterized protein (412 aa).

In terms of domain architecture, TRAM spans 6 to 64; the sequence is ELAKGDIISVEVLRPAHGGEGIGHHDGRVIFVKGGIPGDVVDVEIAQLKKKWARGEVVK. 4 residues coordinate S-adenosyl-L-methionine: glutamine 242, tyrosine 278, glutamate 300, and aspartate 341. Catalysis depends on cysteine 368, which acts as the Nucleophile.

Belongs to the class I-like SAM-binding methyltransferase superfamily. RNA M5U methyltransferase family.

This is an uncharacterized protein from Corynebacterium glutamicum (strain ATCC 13032 / DSM 20300 / JCM 1318 / BCRC 11384 / CCUG 27702 / LMG 3730 / NBRC 12168 / NCIMB 10025 / NRRL B-2784 / 534).